We begin with the raw amino-acid sequence, 3411 residues long: Genome polyprotein (3411 aa).

Residues 1–104 (MSGRKAQGKT…LSSRKRRSHD (104 aa)) are Cytoplasmic-facing. The hydrophobic; homodimerization of capsid protein C stretch occupies residues 38-72 (PGPSRGVQGFIFFFLFNILTGKKITAQLKRLWKML). Residues 102 to 121 (SHDVLTVQFLILGMLLMTGG) constitute a propeptide, ER anchor for the capsid protein C, removed in mature form by serine protease NS3. A helical membrane pass occupies residues 105-125 (VLTVQFLILGMLLMTGGVTLM). Over 126–244 (RKNRWLLLNV…GERQLQKIER (119 aa)) the chain is Extracellular. Asn-134 and Asn-150 each carry an N-linked (GlcNAc...) asparagine; by host glycan. Residues 245–265 (WFVRNPFFAVTALTIAYLVGS) traverse the membrane as a helical segment. Residues 266–270 (NMTQR) are Cytoplasmic-facing. A helical transmembrane segment spans residues 271–285 (VVIALLVLAVGPAYS). Topologically, residues 286 to 730 (AHCIGVADRD…TVFGSAFQGL (445 aa)) are extracellular. 8 disulfides stabilise this stretch: Cys-288–Cys-315, Cys-345–Cys-401, Cys-345–Cys-406, Cys-359–Cys-390, Cys-377–Cys-401, Cys-377–Cys-406, Cys-467–Cys-568, and Cys-585–Cys-615. The fusion peptide stretch occupies residues 383-396 (DRGWGNGCGLFGKG). Residues 731 to 751 (FGGLNWITKVIMGAVLIWVGF) traverse the membrane as a helical segment. Residues 752-757 (NTRNMT) lie on the Cytoplasmic side of the membrane. A helical membrane pass occupies residues 758–778 (MSMSMILVGVIMMFLSLGVGA). The Extracellular portion of the chain corresponds to 779–1132 (DQGCAINFGK…LVRSWVTAGE (354 aa)). Intrachain disulfides connect Cys-782/Cys-793, Cys-833/Cys-921, Cys-957/Cys-1002, Cys-1058/Cys-1107, Cys-1069/Cys-1091, and Cys-1090/Cys-1094. Residues Asn-908 and Asn-986 are each glycosylated (N-linked (GlcNAc...) asparagine; by host). Residues 1133-1153 (IHAVPFGLVSMMIAMEVVLRK) form a helical membrane-spanning segment. At 1154–1201 (RQGPKQVLVGGVVLLGAMLVGQVTLLDLLELTVAVGLHFHEMNNGGDA) the chain is on the cytoplasmic side. The chain crosses the membrane as a helical span at residues 1202 to 1222 (MYMALIAAFSVRPGLLIGFGL). At 1223–1287 (RTLWSPRERL…ILPLMALLTP (65 aa)) the chain is on the lumenal side. The helical transmembrane segment at 1288–1308 (VTMAEVRLATMLFCTVVIIGV) threads the bilayer. The Cytoplasmic segment spans residues 1309–1355 (LHQNSKDTSMQKTIPLVALTLTSYLGLTQPFLGLCAFLATRIFGRRS). Residues 1356–1376 (IPVNEALAATGLVGVLAGLAF) form a helical membrane-spanning segment. Topologically, residues 1377–1378 (QE) are lumenal. Residues 1379–1399 (MENFLGPIAVGGILMMLVSVA) traverse the membrane as a helical segment. Over 1400–1456 (GRVDGLELKKLGEVSWEEEAEISGSSARYDVALSEQGEFKLLSEEKVPWDQVVMTSL) the chain is Cytoplasmic. An interacts with and activates NS3 protease region spans residues 1407-1446 (LKKLGEVSWEEEAEISGSSARYDVALSEQGEFKLLSEEKV). An intramembrane region (helical) is located at residues 1457–1477 (ALVGAAIHPFALLLVLAGWLF). At 1478 to 2157 (HVRRARRSGD…RNALSMMPEA (680 aa)) the chain is on the cytoplasmic side. Residues 1485–1665 (SGDVLWDIPT…EVKEEGKEEL (181 aa)) form the Peptidase S7 domain. Active-site charge relay system; for serine protease NS3 activity residues include His-1537, Asp-1561, and Ser-1622. One can recognise a Helicase ATP-binding domain in the interval 1669–1825 (PTMLKKGKTT…HSNGEIEDVQ (157 aa)). Positions 1673–1676 (KKGK) are important for RNA-binding. 1682–1689 (FHPGAGKT) provides a ligand contact to ATP. The DEAH box signature appears at 1773-1776 (DEAH). The region spanning 1820-1997 (EIEDVQTDIP…VRGGMVAPLY (178 aa)) is the Helicase C-terminal domain. N6-acetyllysine; by host is present on Lys-1877. Residues 1942 to 1961 (AAQRRGRIGRNPNRDGDSYY) form a disordered region. Residues 2158–2178 (MTIVMLFLLAGLLTSGMVIFF) form a helical membrane-spanning segment. Over 2179–2186 (MSPKGISR) the chain is Lumenal. Positions 2187–2207 (MSMAKGTMAGCGYLMFLGGVE) form an intramembrane region, helical. Over 2208–2209 (PT) the chain is Lumenal. A helical transmembrane segment spans residues 2210–2230 (HISYIMLIFFVLMVVVIPEPG). Over 2231–2241 (QQRSIQDNQVA) the chain is Cytoplasmic. A helical membrane pass occupies residues 2242 to 2256 (FLIIGILTLVSVVAA). The Lumenal segment spans residues 2257-2293 (NELGMLEKTKEDLFGKKNLIPSGASPWSWPDLDLKPG). Residues 2294-2314 (AAWTVYVGIVTMLSPMLHHWI) constitute an intramembrane region (helical). The Lumenal segment spans residues 2315–2360 (KVEYGNLSLSGIAQSASVLSFMDKGIPFMKMNISVIMLLVSGWNSI). Residues 2361–2380 (TVMPLLCGIGCAMLHWSLIL) form a helical membrane-spanning segment. Residues 2381 to 2421 (PGIKAQQSKLAQRRVFHGVAKNPVVDGNPTVDIEEAPEMPA) are Cytoplasmic-facing. Residues 2422–2442 (LYEKKLALYLLLALSLASVAM) form a helical membrane-spanning segment. Residues 2443 to 2445 (CRT) are Lumenal-facing. Residues 2446-2466 (PFSLDEGIVLASAALGPLIEG) traverse the membrane as a helical segment. The Cytoplasmic portion of the chain corresponds to 2467–3411 (NTSLLWNGPM…DADLQPGELI (945 aa)). The mRNA cap 0-1 NS5-type MT domain maps to 2507 to 2771 (GTANGKTLGE…DVTLPIGTRS (265 aa)). Residue Ser-2562 coordinates S-adenosyl-L-methionine. Ser-2562 carries the phosphoserine modification. The active-site For 2'-O-MTase activity is the Lys-2567. S-adenosyl-L-methionine is bound by residues Gly-2592, Trp-2593, Thr-2610, Leu-2611, Asp-2637, and Val-2638. Asp-2652 (for 2'-O-MTase activity) is an active-site residue. Ile-2653 contributes to the S-adenosyl-L-methionine binding site. Residues Lys-2688 and Glu-2724 each act as for 2'-O-MTase activity in the active site. Tyr-2726 contributes to the S-adenosyl-L-methionine binding site. The Nuclear localization signal signature appears at 2878–2911 (RKIMKVVNRWLFRHLAREKNPRLCTKEEFIAKVR). 4 residues coordinate Zn(2+): Glu-2945, His-2949, Cys-2954, and Cys-2957. Residues 3035–3187 (GGLYADDTAG…RPIDDRFGLA (153 aa)) enclose the RdRp catalytic domain. Residues His-3222, Cys-3238, and Cys-3357 each coordinate Zn(2+).

The protein in the N-terminal section; belongs to the class I-like SAM-binding methyltransferase superfamily. mRNA cap 0-1 NS5-type methyltransferase family. Homodimer. Interacts (via N-terminus) with host EXOC1 (via C-terminus); this interaction results in EXOC1 degradation through the proteasome degradation pathway. In terms of assembly, forms heterodimers with envelope protein E in the endoplasmic reticulum and Golgi. As to quaternary structure, homodimer; in the endoplasmic reticulum and Golgi. Interacts with protein prM. Interacts with non-structural protein 1. Homodimer; Homohexamer when secreted. Interacts with envelope protein E. In terms of assembly, interacts (via N-terminus) with serine protease NS3. As to quaternary structure, forms a heterodimer with serine protease NS3. May form homooligomers. Forms a heterodimer with NS2B. Interacts with non-structural protein 2A (via N-terminus). Interacts with NS4B. Interacts with unphosphorylated RNA-directed RNA polymerase NS5; this interaction stimulates RNA-directed RNA polymerase NS5 guanylyltransferase activity. NS3 interacts with host PDCD6IP; this interaction contributes to virion release. In terms of assembly, interacts with serine protease NS3. As to quaternary structure, homodimer. Interacts with host STAT2; this interaction prevents the establishment of cellular antiviral state. Interacts with serine protease NS3. Interacts with host TRIM23; this interaction leads to NS5 ubiquitination. Post-translationally, specific enzymatic cleavages in vivo yield mature proteins. The nascent capsid protein C contains a C-terminal hydrophobic domain that act as a signal sequence for translocation of prM into the lumen of the ER. Mature capsid protein C is cleaved at a site upstream of this hydrophobic domain by NS3. prM is cleaved in post-Golgi vesicles by a host furin, releasing the mature small envelope protein M, and peptide pr. Non-structural protein 2A-alpha, a C-terminally truncated form of non-structural protein 2A, results from partial cleavage by NS3. Specific enzymatic cleavages in vivo yield mature proteins peptide 2K acts as a signal sequence and is removed from the N-terminus of NS4B by the host signal peptidase in the ER lumen. Signal cleavage at the 2K-4B site requires a prior NS3 protease-mediated cleavage at the 4A-2K site. Cleaved in post-Golgi vesicles by a host furin, releasing the mature small envelope protein M, and peptide pr. This cleavage is incomplete as up to 30% of viral particles still carry uncleaved prM. In terms of processing, N-glycosylated. Post-translationally, N-glycosylated. The excreted form is glycosylated and this is required for efficient secretion of the protein from infected cells. Polyubiquitinated; ubiquitination is probably mediated by host TRIM23 and is prerequisite for NS5-STAT2 interaction. NS5 is not ISGylated or sumoylated. In terms of processing, acetylated by host KAT5. Acetylation modulates NS3 RNA-binding and unwinding activities and plays an important positive role for viral replication. Post-translationally, phosphorylated on serines residues. This phosphorylation may trigger NS5 nuclear localization.

The protein localises to the virion. It is found in the host nucleus. Its subcellular location is the host cytoplasm. The protein resides in the host perinuclear region. It localises to the secreted. The protein localises to the virion membrane. It is found in the host endoplasmic reticulum membrane. It catalyses the reaction Selective hydrolysis of -Xaa-Xaa-|-Yaa- bonds in which each of the Xaa can be either Arg or Lys and Yaa can be either Ser or Ala.. The enzyme catalyses RNA(n) + a ribonucleoside 5'-triphosphate = RNA(n+1) + diphosphate. The catalysed reaction is a ribonucleoside 5'-triphosphate + H2O = a ribonucleoside 5'-diphosphate + phosphate + H(+). It carries out the reaction ATP + H2O = ADP + phosphate + H(+). It catalyses the reaction a 5'-end (5'-triphosphoguanosine)-ribonucleoside in mRNA + S-adenosyl-L-methionine = a 5'-end (N(7)-methyl 5'-triphosphoguanosine)-ribonucleoside in mRNA + S-adenosyl-L-homocysteine. The enzyme catalyses a 5'-end (N(7)-methyl 5'-triphosphoguanosine)-ribonucleoside in mRNA + S-adenosyl-L-methionine = a 5'-end (N(7)-methyl 5'-triphosphoguanosine)-(2'-O-methyl-ribonucleoside) in mRNA + S-adenosyl-L-homocysteine + H(+). Its function is as follows. Plays a role in virus budding by binding to the cell membrane and gathering the viral RNA into a nucleocapsid that forms the core of a mature virus particle. During virus entry, may induce genome penetration into the host cytoplasm after hemifusion induced by the surface proteins. Can migrate to the cell nucleus where it modulates host functions. In terms of biological role, inhibits RNA silencing by interfering with host Dicer. Prevents premature fusion activity of envelope proteins in trans-Golgi by binding to envelope protein E at pH6.0. After virion release in extracellular space, gets dissociated from E dimers. Functionally, acts as a chaperone for envelope protein E during intracellular virion assembly by masking and inactivating envelope protein E fusion peptide. prM is the only viral peptide matured by host furin in the trans-Golgi network probably to avoid catastrophic activation of the viral fusion activity in acidic Golgi compartment prior to virion release. prM-E cleavage is inefficient, and many virions are only partially matured. These uncleaved prM would play a role in immune evasion. Its function is as follows. May play a role in virus budding. Exerts cytotoxic effects by activating a mitochondrial apoptotic pathway through M ectodomain. May display a viroporin activity. In terms of biological role, binds to host cell surface receptor and mediates fusion between viral and cellular membranes. Envelope protein is synthesized in the endoplasmic reticulum in the form of heterodimer with protein prM. They play a role in virion budding in the ER, and the newly formed immature particle is covered with 60 spikes composed of heterodimer between precursor prM and envelope protein E. The virion is transported to the Golgi apparatus where the low pH causes dissociation of PrM-E heterodimers and formation of E homodimers. prM-E cleavage is inefficient, and many virions are only partially matured. These uncleaved prM would play a role in immune evasion. Involved in immune evasion, pathogenesis and viral replication. Once cleaved off the polyprotein, is targeted to three destinations: the viral replication cycle, the plasma membrane and the extracellular compartment. Essential for viral replication. Required for formation of the replication complex and recruitment of other non-structural proteins to the ER-derived membrane structures. Excreted as a hexameric lipoparticle that plays a role against host immune response. Antagonizing the complement function. Binds to the host macrophages and dendritic cells. Inhibits signal transduction originating from Toll-like receptor 3 (TLR3). Functionally, component of the viral RNA replication complex that functions in virion assembly and antagonizes the host immune response. Its function is as follows. Required cofactor for the serine protease function of NS3. May have membrane-destabilizing activity and form viroporins. In terms of biological role, displays three enzymatic activities: serine protease, NTPase and RNA helicase. NS3 serine protease, in association with NS2B, performs its autocleavage and cleaves the polyprotein at dibasic sites in the cytoplasm: C-prM, NS2A-NS2B, NS2B-NS3, NS3-NS4A, NS4A-2K and NS4B-NS5. NS3 RNA helicase binds RNA and unwinds dsRNA in the 3' to 5' direction. Also plays a role in virus assembly. Regulates the ATPase activity of the NS3 helicase activity. NS4A allows NS3 helicase to conserve energy during unwinding. Functionally, functions as a signal peptide for NS4B and is required for the interferon antagonism activity of the latter. Its function is as follows. Induces the formation of ER-derived membrane vesicles where the viral replication takes place. Inhibits interferon (IFN)-induced host STAT1 phosphorylation and nuclear translocation, thereby preventing the establishment of cellular antiviral state by blocking the IFN-alpha/beta pathway. In terms of biological role, replicates the viral (+) and (-) RNA genome, and performs the capping of genomes in the cytoplasm. NS5 methylates viral RNA cap at guanine N-7 and ribose 2'-O positions. Besides its role in RNA genome replication, also prevents the establishment of cellular antiviral state by blocking the interferon-alpha/beta (IFN-alpha/beta) signaling pathway. IFN-I induces binding of NS5 to host IFN-activated transcription factor STAT2, preventing its transcriptional activity. Host TRIM23 is the E3 ligase that interacts with and polyubiquitinates NS5 to promote its binding to STAT2 and trigger IFN-I signaling inhibition. The polypeptide is Genome polyprotein (Aedes aegypti (Yellowfever mosquito)).